We begin with the raw amino-acid sequence, 78 residues long: Conotoxin TsMSGL-13 (78 aa).

Residues 1-24 form the signal peptide; sequence MSGLGIMVLTLLLFMFMATSHQDA. Positions 25-44 are excised as a propeptide; that stretch reads GEKQATQRDAINVRRRRSIT. Disulfide bonds link Cys-51–Cys-63, Cys-55–Cys-72, and Cys-62–Cys-76. Phe-77 is modified (phenylalanine amide).

This sequence belongs to the conotoxin O3 superfamily. As to expression, expressed by the venom duct.

It is found in the secreted. This Conus tessulatus (Tessellate cone) protein is Conotoxin TsMSGL-13.